A 234-amino-acid chain; its full sequence is MPTPHIEAQDGEFAETVLMPGDPLRAKFIADNFLDDAKCITQVRNMLGYTGTYKGKRVSVMGSGMGVPSISIYATELYKDYGVEKIIRIGSCGAVRDDIKIRDIVIGMAASTDSNVNRQRFHNVDFAACADFSLLKSVVDTAEKLGKPVHVGNIFTADLFYTPQPEKFATMEKYGILAVEMEAAGLYGVAAEYGKKALTVLTVSDHIKTGEKTTSEERETTFKDMMELTLESVL.

His5 lines the a purine D-ribonucleoside pocket. Residues Gly21, Arg25, Arg44, and 88–91 (RIGS) contribute to the phosphate site. Residues 180-182 (EME) and 204-205 (SD) each bind a purine D-ribonucleoside. Residue Asp205 is the Proton donor of the active site.

It belongs to the PNP/UDP phosphorylase family. In terms of assembly, homohexamer; trimer of homodimers.

The catalysed reaction is a purine D-ribonucleoside + phosphate = a purine nucleobase + alpha-D-ribose 1-phosphate. It carries out the reaction a purine 2'-deoxy-D-ribonucleoside + phosphate = a purine nucleobase + 2-deoxy-alpha-D-ribose 1-phosphate. In terms of biological role, catalyzes the reversible phosphorolytic breakdown of the N-glycosidic bond in the beta-(deoxy)ribonucleoside molecules, with the formation of the corresponding free purine bases and pentose-1-phosphate. The polypeptide is Purine nucleoside phosphorylase DeoD-type (Colwellia psychrerythraea (strain 34H / ATCC BAA-681) (Vibrio psychroerythus)).